The primary structure comprises 107 residues: Nucleoid-associated protein PHZ_c0369 (107 aa).

This sequence belongs to the YbaB/EbfC family. As to quaternary structure, homodimer.

The protein resides in the cytoplasm. It is found in the nucleoid. Functionally, binds to DNA and alters its conformation. May be involved in regulation of gene expression, nucleoid organization and DNA protection. This Phenylobacterium zucineum (strain HLK1) protein is Nucleoid-associated protein PHZ_c0369.